The following is a 205-amino-acid chain: Protein Nef (205 aa).

The N-myristoyl glycine; by host moiety is linked to residue G2. S6 bears the Phosphoserine; by host mark. An acidic; interacts with host PACS1 and PACS2; stabilizes the interaction of NEF/MHC-I with host AP1M1; necessary for MHC-I internalization region spans residues 62-65; the sequence is EEEE. The tract at residues 69–78 is SH3-binding; interaction with Src family tyrosine kinases; that stretch reads PVRPQVPVRP. The short motif at 72-75 is the PxxP; stabilizes the interaction of NEF/MHC-I with host AP1M1; necessary for MHC-I internalization element; sequence PQVP. The tract at residues 108 to 124 is mediates dimerization, Nef-PTE1 interaction; that stretch reads DTLDLWVYHTQGYFPDW. The tract at residues 148-180 is binding to ATP6V1H; the sequence is VDPEEVEKANEGENNCLLHPMSQHGMEDEDREV. Residues 164–165 carry the Dileucine internalization motif; necessary for CD4 internalization motif; it reads LL. Residues 174-175 carry the Diacidic; necessary for CD4 internalization motif; the sequence is ED.

This sequence belongs to the lentivirus primate group Nef protein family. Monomer; cytosolic form. Homodimer; membrane bound form. Interacts with Nef associated p21-activated kinase (PAK2); this interaction activates PAK2. Associates with the Nef-MHC-I-AP1 complex; this complex is required for MHC-I internalization. Interacts (via C-terminus) with host PI3-kinase. Interacts with host PACS1; this interaction seems to be weak. Interacts with host PACS2. Interacts with host LCK and MAPK3; these interactions inhibit the kinase activity of the latter. Interacts with host ATP6V1H; this interaction may play a role in CD4 endocytosis. Associates with the CD4-Nef-AP2 complex; this complex is required for CD4 internalization. Interacts with host AP2 subunit alpha and AP2 subunit sigma2. Interacts with TCR-zeta chain; this interaction up-regulates the Fas ligand (FasL) surface expression. Interacts with host HCK, LYN, and SRC; these interactions activate the Src family kinases. Interacts with MAP3K5; this interaction inhibits the Fas and TNFR-mediated death signals. Interacts with beta-COP and PTE1. Interacts with human RACK1; this increases Nef phosphorylation by PKC. Interacts with TP53; this interaction decreases the half-life of TP53, protecting the infected cell against p53-mediated apoptosis. In terms of processing, the virion-associated Nef proteins are cleaved by the viral protease to release the soluble C-terminal core protein. Nef is probably cleaved concomitantly with viral structural proteins on maturation of virus particles. Myristoylated. Post-translationally, phosphorylated on serine residues, probably by host PKCdelta and theta.

It is found in the host cell membrane. It localises to the virion. The protein resides in the secreted. The protein localises to the host Golgi apparatus membrane. Its function is as follows. Factor of infectivity and pathogenicity, required for optimal virus replication. Alters numerous pathways of T-lymphocyte function and down-regulates immunity surface molecules in order to evade host defense and increase viral infectivity. Alters the functionality of other immunity cells, like dendritic cells, monocytes/macrophages and NK cells. Functionally, in infected CD4(+) T-lymphocytes, down-regulates the surface MHC-I, mature MHC-II, CD4, CD28, CCR5 and CXCR4 molecules. Mediates internalization and degradation of host CD4 through the interaction of with the cytoplasmic tail of CD4, the recruitment of AP-2 (clathrin adapter protein complex 2), internalization through clathrin coated pits, and subsequent transport to endosomes and lysosomes for degradation. Diverts host MHC-I molecules to the trans-Golgi network-associated endosomal compartments by an endocytic pathway to finally target them for degradation. MHC-I down-regulation may involve AP-1 (clathrin adapter protein complex 1) or possibly Src family kinase-ZAP70/Syk-PI3K cascade recruited by PACS2. In consequence infected cells are masked for immune recognition by cytotoxic T-lymphocytes. Decreasing the number of immune receptors also prevents reinfection by more HIV particles (superinfection). Down-regulates host SERINC3 and SERINC5 thereby excluding these proteins from the viral particles. Virion infectivity is drastically higher when SERINC3 or SERINC5 are excluded from the viral envelope, because these host antiviral proteins impair the membrane fusion event necessary for subsequent virion penetration. Bypasses host T-cell signaling by inducing a transcriptional program nearly identical to that of anti-CD3 cell activation. Interaction with TCR-zeta chain up-regulates the Fas ligand (FasL). Increasing surface FasL molecules and decreasing surface MHC-I molecules on infected CD4(+) cells send attacking cytotoxic CD8+ T-lymphocytes into apoptosis. In terms of biological role, plays a role in optimizing the host cell environment for viral replication without causing cell death by apoptosis. Protects the infected cells from apoptosis in order to keep them alive until the next virus generation is ready to strike. Inhibits the Fas and TNFR-mediated death signals by blocking MAP3K5/ASK1. Decreases the half-life of TP53, protecting the infected cell against p53-mediated apoptosis. Inhibits the apoptotic signals regulated by the Bcl-2 family proteins through the formation of a Nef/PI3-kinase/PAK2 complex that leads to activation of PAK2 and induces phosphorylation of host BAD. Its function is as follows. Extracellular Nef protein targets CD4(+) T-lymphocytes for apoptosis by interacting with CXCR4 surface receptors. In Human immunodeficiency virus type 1 group M subtype F1 (isolate VI850) (HIV-1), this protein is Protein Nef.